Reading from the N-terminus, the 56-residue chain is Large ribosomal subunit protein bL32 (56 aa).

This sequence belongs to the bacterial ribosomal protein bL32 family.

The polypeptide is Large ribosomal subunit protein bL32 (Bacillus cereus (strain ATCC 14579 / DSM 31 / CCUG 7414 / JCM 2152 / NBRC 15305 / NCIMB 9373 / NCTC 2599 / NRRL B-3711)).